Consider the following 78-residue polypeptide: MSTIEERVKKIVAEQLGVKEEEVTNSASFVEDLGADSLDTVELVMALEEEFETEIPDEQAEKITTVQEAIDYINAHAQ.

The Carrier domain occupies 2 to 77 (STIEERVKKI…EAIDYINAHA (76 aa)). Position 37 is an O-(pantetheine 4'-phosphoryl)serine (Ser37).

The protein belongs to the acyl carrier protein (ACP) family. 4'-phosphopantetheine is transferred from CoA to a specific serine of apo-ACP by AcpS. This modification is essential for activity because fatty acids are bound in thioester linkage to the sulfhydryl of the prosthetic group.

It localises to the cytoplasm. Its pathway is lipid metabolism; fatty acid biosynthesis. Carrier of the growing fatty acid chain in fatty acid biosynthesis. The polypeptide is Acyl carrier protein (Stutzerimonas stutzeri (strain A1501) (Pseudomonas stutzeri)).